We begin with the raw amino-acid sequence, 37 residues long: MKVRPSVKPICEKCKVIRRRGKVMVICENPKHKQKQG.

The protein belongs to the bacterial ribosomal protein bL36 family.

The sequence is that of Large ribosomal subunit protein bL36 from Bacillus anthracis (strain A0248).